The chain runs to 426 residues: Serine hydroxymethyltransferase (426 aa).

(6S)-5,6,7,8-tetrahydrofolate is bound by residues L113 and 117-119 (GHL). K222 carries the post-translational modification N6-(pyridoxal phosphate)lysine. Residue 363–365 (SAF) participates in (6S)-5,6,7,8-tetrahydrofolate binding.

This sequence belongs to the SHMT family. As to quaternary structure, homodimer. The cofactor is pyridoxal 5'-phosphate.

Its subcellular location is the cytoplasm. The catalysed reaction is (6R)-5,10-methylene-5,6,7,8-tetrahydrofolate + glycine + H2O = (6S)-5,6,7,8-tetrahydrofolate + L-serine. It functions in the pathway one-carbon metabolism; tetrahydrofolate interconversion. It participates in amino-acid biosynthesis; glycine biosynthesis; glycine from L-serine: step 1/1. Functionally, catalyzes the reversible interconversion of serine and glycine with tetrahydrofolate (THF) serving as the one-carbon carrier. This reaction serves as the major source of one-carbon groups required for the biosynthesis of purines, thymidylate, methionine, and other important biomolecules. Also exhibits THF-independent aldolase activity toward beta-hydroxyamino acids, producing glycine and aldehydes, via a retro-aldol mechanism. This Bacteroides fragilis (strain ATCC 25285 / DSM 2151 / CCUG 4856 / JCM 11019 / LMG 10263 / NCTC 9343 / Onslow / VPI 2553 / EN-2) protein is Serine hydroxymethyltransferase.